We begin with the raw amino-acid sequence, 375 residues long: MPSGSGFQNIEEAGEKARRRDDWIAISNFHPGWFSVNMGTGITAILLQNLPYQFPGLHYIAVVLFVLNVIIFFFFLTISITRYALWPEKFKAMLAHPAHSMLLGTFPMGFATIINCIIFICVPVWGDWAARFAWGLWWVDATVSIAICYFVPFMLMTKHTSSLETMTAAWLLPIVAPVVAAASGGVVADALKNDTHALITILVCYVMWGSAVPLAMVILVIYFQRLALHKLVPRAAIVSALLPIGPLGQGGFGLMQLGVVARRVFPRLDFLAPIAGEIFYVMGAFIAMIMWGFGLIWLWFALASFTRGKFYFNIGWWAFTFPLGVFTTATTQMGKEFNSVVFDVLGTFFSIVVAAMWVMVFALTVYKSCTKELFK.

Residues 1–25 (MPSGSGFQNIEEAGEKARRRDDWIA) are Cytoplasmic-facing. The chain crosses the membrane as a helical span at residues 26–46 (ISNFHPGWFSVNMGTGITAIL). Topologically, residues 47-59 (LQNLPYQFPGLHY) are extracellular. The helical transmembrane segment at 60–80 (IAVVLFVLNVIIFFFFLTISI) threads the bilayer. Over 81–101 (TRYALWPEKFKAMLAHPAHSM) the chain is Cytoplasmic. The helical transmembrane segment at 102–122 (LLGTFPMGFATIINCIIFICV) threads the bilayer. Over 123 to 135 (PVWGDWAARFAWG) the chain is Extracellular. The chain crosses the membrane as a helical span at residues 136-156 (LWWVDATVSIAICYFVPFMLM). At 157-167 (TKHTSSLETMT) the chain is on the cytoplasmic side. Residues 168–188 (AAWLLPIVAPVVAAASGGVVA) traverse the membrane as a helical segment. At 189-200 (DALKNDTHALIT) the chain is on the extracellular side. Asn193 carries an N-linked (GlcNAc...) asparagine glycan. A helical membrane pass occupies residues 201 to 221 (ILVCYVMWGSAVPLAMVILVI). Topologically, residues 222–234 (YFQRLALHKLVPR) are cytoplasmic. Residues 235 to 255 (AAIVSALLPIGPLGQGGFGLM) traverse the membrane as a helical segment. Residues 256 to 277 (QLGVVARRVFPRLDFLAPIAGE) are Extracellular-facing. The chain crosses the membrane as a helical span at residues 278 to 298 (IFYVMGAFIAMIMWGFGLIWL). Topologically, residues 299–309 (WFALASFTRGK) are cytoplasmic. A helical transmembrane segment spans residues 310-330 (FYFNIGWWAFTFPLGVFTTAT). Residues 331 to 343 (TQMGKEFNSVVFD) lie on the Extracellular side of the membrane. A helical membrane pass occupies residues 344–364 (VLGTFFSIVVAAMWVMVFALT). Over 365-375 (VYKSCTKELFK) the chain is Cytoplasmic.

This sequence belongs to the tellurite-resistance/dicarboxylate transporter (TDT) family.

The protein resides in the cell membrane. Functionally, sulphite efflux pump required for the secretion of sulphite as a reducing agent. In the presence of sulphite, cystine in keratin is directly cleaved to cysteine and S-sulphocysteine, and thereby, reduced proteins become accessible to hydrolysis by a variety of secreted endo- and exoproteases. Excretion of sulphite mediated by an efflux pump also represents a detoxification pathway for dermatophytes during infection of the epidermal stratum corneum, hair and nails, which are rich in cysteine. This chain is Sulfite efflux pump SSU1 (SSU1), found in Arthroderma otae (strain ATCC MYA-4605 / CBS 113480) (Microsporum canis).